The sequence spans 396 residues: MAKAKFERNKPHLNIGTIGHVDHGKTTLTAAISKVLADKYPDVNEQRDFGAIDSAPEEKQRGITINIAHIEYQTDKRHYAHVDAPGHADYVKNMITGAAQMDGAILVVAATDGPMAQTREHVLLARQVGVPYLLVALNKSDMVDDEELLDLVEMEVRELLSDQGFDGDNAPVVRVSALKALEGDAQWVKSVEDLMEAVDENVPDPVRDTDKPFLMPIEDVFTITGRGTVVTGRAERGTLPINSEVEIVGIRPVQKTTVTGIEMFHKQMDEAMAGENCGLLLRGLKRDDVERGQVVCKPGSITPHTDFEANVYILSKEEGGRHNPFYSNYRPQFYFRTTDVTGVITLPEGTEMVMPGDNTEMTVELIQPIAMEEGLGFAIREGGRTVGSGRVTKIIK.

The 197-residue stretch at 10–206 (KPHLNIGTIG…AVDENVPDPV (197 aa)) folds into the tr-type G domain. The G1 stretch occupies residues 19 to 26 (GHVDHGKT). Residue 19–26 (GHVDHGKT) coordinates GTP. Thr26 provides a ligand contact to Mg(2+). The G2 stretch occupies residues 62–66 (GITIN). Residues 83 to 86 (DAPG) form a G3 region. GTP contacts are provided by residues 83-87 (DAPGH) and 138-141 (NKSD). The tract at residues 138-141 (NKSD) is G4. A G5 region spans residues 176–178 (SAL).

The protein belongs to the TRAFAC class translation factor GTPase superfamily. Classic translation factor GTPase family. EF-Tu/EF-1A subfamily. Monomer.

Its subcellular location is the cytoplasm. The enzyme catalyses GTP + H2O = GDP + phosphate + H(+). GTP hydrolase that promotes the GTP-dependent binding of aminoacyl-tRNA to the A-site of ribosomes during protein biosynthesis. The sequence is that of Elongation factor Tu from Kocuria rhizophila (strain ATCC 9341 / DSM 348 / NBRC 103217 / DC2201).